The chain runs to 311 residues: Triacylglycerol lipase (311 aa).

A signal peptide spans 1-26 (MKKKSLLPLGLAIGLASLAASPLIQA). Residues 35–280 (PIVLAHGMLG…DNYRMNHLDE (246 aa)) enclose the AB hydrolase-1 domain. Met-42 lines the substrate pocket. Ser-108 functions as the Nucleophile in the catalytic mechanism. A substrate-binding site is contributed by His-109. An intrachain disulfide couples Cys-209 to Cys-261. Residue Asp-235 participates in Ca(2+) binding. Residues Asp-255 and His-277 each act as charge relay system in the active site. Ca(2+) is bound by residues Asp-279, Gln-283, and Leu-287.

The protein belongs to the AB hydrolase superfamily. Pseudomonas lipase family. Monomer. Ca(2+) is required as a cofactor.

It localises to the secreted. It catalyses the reaction a triacylglycerol + H2O = a diacylglycerol + a fatty acid + H(+). With respect to regulation, na(+) increases lipase activity. Inhibited by diethyl p-nitrophenyl phosphate and 3,4-dichloroisocoumarin (DCI). Functionally, catalyzes the hydrolysis of triacylglycerol. It also exhibits some esterase activity with p-nitrophenyl acetate and Tween 80 as substrates, however the lipase activity is approximately eight times the esterase activity. It shows a marked specificity for the 1,3-oleyl residues of triolein. The protein is Triacylglycerol lipase of Pseudomonas aeruginosa (strain ATCC 15692 / DSM 22644 / CIP 104116 / JCM 14847 / LMG 12228 / 1C / PRS 101 / PAO1).